The chain runs to 164 residues: Aspartate carbamoyltransferase regulatory chain (164 aa).

Zn(2+) contacts are provided by Cys116, Cys121, Cys146, and Cys149.

It belongs to the PyrI family. As to quaternary structure, contains catalytic and regulatory chains. Zn(2+) serves as cofactor.

Its function is as follows. Involved in allosteric regulation of aspartate carbamoyltransferase. This Staphylothermus marinus (strain ATCC 43588 / DSM 3639 / JCM 9404 / F1) protein is Aspartate carbamoyltransferase regulatory chain.